Reading from the N-terminus, the 250-residue chain is Adenosylcobinamide-GDP ribazoletransferase (250 aa).

6 helical membrane passes run 31-51, 55-75, 106-126, 133-153, 187-207, and 230-250; these read ISYL…VYFV, FILG…ITGA, VGTN…AVLN, IIIA…LLMC, IGYV…VLFI, and NEIA…CGLL.

This sequence belongs to the CobS family. Mg(2+) serves as cofactor.

The protein localises to the cell membrane. The enzyme catalyses alpha-ribazole + adenosylcob(III)inamide-GDP = adenosylcob(III)alamin + GMP + H(+). It catalyses the reaction alpha-ribazole 5'-phosphate + adenosylcob(III)inamide-GDP = adenosylcob(III)alamin 5'-phosphate + GMP + H(+). It participates in cofactor biosynthesis; adenosylcobalamin biosynthesis; adenosylcobalamin from cob(II)yrinate a,c-diamide: step 7/7. Its function is as follows. Joins adenosylcobinamide-GDP and alpha-ribazole to generate adenosylcobalamin (Ado-cobalamin). Also synthesizes adenosylcobalamin 5'-phosphate from adenosylcobinamide-GDP and alpha-ribazole 5'-phosphate. The polypeptide is Adenosylcobinamide-GDP ribazoletransferase (Clostridium novyi (strain NT)).